The primary structure comprises 267 residues: Undecaprenyl-diphosphatase (267 aa).

Transmembrane regions (helical) follow at residues 4-24 (ILII…PISS), 41-61 (NIQN…ILLF), 84-104 (ILIL…GFMF), 116-136 (YISY…FISL), 160-180 (CFSL…GLIL), 185-205 (YVLF…VLIL), 216-236 (ENIF…LIFG), and 246-266 (TSLI…LFTC).

It belongs to the UppP family.

Its subcellular location is the cell membrane. The enzyme catalyses di-trans,octa-cis-undecaprenyl diphosphate + H2O = di-trans,octa-cis-undecaprenyl phosphate + phosphate + H(+). Its function is as follows. Catalyzes the dephosphorylation of undecaprenyl diphosphate (UPP). Confers resistance to bacitracin. This Wigglesworthia glossinidia brevipalpis protein is Undecaprenyl-diphosphatase.